Reading from the N-terminus, the 332-residue chain is Protein phosphatase PTC7 homolog fig (332 aa).

The PPM-type phosphatase domain maps to 70–325 (KPCSPRERAN…DDITLILASV (256 aa)). Mn(2+) contacts are provided by aspartate 102, glycine 103, and aspartate 247.

This sequence belongs to the PP2C family. Mg(2+) is required as a cofactor. It depends on Mn(2+) as a cofactor.

The enzyme catalyses O-phospho-L-seryl-[protein] + H2O = L-seryl-[protein] + phosphate. The catalysed reaction is O-phospho-L-threonyl-[protein] + H2O = L-threonyl-[protein] + phosphate. The polypeptide is Protein phosphatase PTC7 homolog fig (Drosophila ananassae (Fruit fly)).